Reading from the N-terminus, the 386-residue chain is L-lactate oxidase (386 aa).

In terms of domain architecture, FMN hydroxy acid dehydrogenase spans 16–382; it reads AQAPFPICFA…RTITLVKNDG (367 aa). Tyrosine 42 provides a ligand contact to pyruvate. Residues 95 to 97, serine 124, and glutamine 146 each bind FMN; that span reads PVG. Tyrosine 148 serves as a coordination point for pyruvate. Threonine 174 is a binding site for FMN. Arginine 183 serves as a coordination point for pyruvate. The FMN site is built by lysine 253 and serine 275. 2 residues coordinate pyruvate: histidine 277 and arginine 280. Histidine 277 functions as the Proton acceptor in the catalytic mechanism. FMN-binding positions include 308 to 312 and arginine 332; that span reads DSGVY.

It belongs to the FMN-dependent alpha-hydroxy acid dehydrogenase family. In terms of assembly, homotetramer. FMN is required as a cofactor.

It carries out the reaction a (2S)-2-hydroxycarboxylate + O2 = a 2-oxocarboxylate + H2O2. The catalysed reaction is (S)-lactate + O2 = pyruvate + H2O2. It catalyses the reaction 2-hydroxyoctanoate + O2 = 2-oxooctanoate + H2O2. The enzyme catalyses mandelate + O2 = phenylglyoxylate + H2O2. It carries out the reaction 2-hydroxyoctadecanoate + O2 = 2-oxooctadecanoate + H2O2. The catalysed reaction is (S)-2-hydroxyglutarate + O2 = H2O2 + 2-oxoglutarate. Its function is as follows. Oxidase that catalyzes the oxidation of a broad range of 2-hydroxyacids in vitro, such as (S)-lactate, 2-hydroxyoctanoate, mandelate, 2-hydroxyoctadecanoate and (S)-2-hydroxyglutarate, to the corresponding 2-oxoacids, with a reduction of O2 to H2O2. May be involved in the utilization of L-lactate as an energy source for growth. This chain is L-lactate oxidase, found in Lysinibacillus sphaericus (strain C3-41).